We begin with the raw amino-acid sequence, 470 residues long: Phosphoribosylamine--glycine ligase (470 aa).

Residues 115-354 (KDFLKRIGVP…MAEISMAVVE (240 aa)) form the ATP-grasp domain. 142–203 (REKFNNGIVV…EERLRGIEVA (62 aa)) lines the ATP pocket. Mg(2+) contacts are provided by E324 and N326.

It belongs to the GARS family. Requires Mg(2+) as cofactor. The cofactor is Mn(2+).

It catalyses the reaction 5-phospho-beta-D-ribosylamine + glycine + ATP = N(1)-(5-phospho-beta-D-ribosyl)glycinamide + ADP + phosphate + H(+). It functions in the pathway purine metabolism; IMP biosynthesis via de novo pathway; N(1)-(5-phospho-D-ribosyl)glycinamide from 5-phospho-alpha-D-ribose 1-diphosphate: step 2/2. This chain is Phosphoribosylamine--glycine ligase (purD), found in Archaeoglobus fulgidus (strain ATCC 49558 / DSM 4304 / JCM 9628 / NBRC 100126 / VC-16).